The sequence spans 241 residues: Phosphoribosylaminoimidazole-succinocarboxamide synthase (241 aa).

This sequence belongs to the SAICAR synthetase family.

It carries out the reaction 5-amino-1-(5-phospho-D-ribosyl)imidazole-4-carboxylate + L-aspartate + ATP = (2S)-2-[5-amino-1-(5-phospho-beta-D-ribosyl)imidazole-4-carboxamido]succinate + ADP + phosphate + 2 H(+). Its pathway is purine metabolism; IMP biosynthesis via de novo pathway; 5-amino-1-(5-phospho-D-ribosyl)imidazole-4-carboxamide from 5-amino-1-(5-phospho-D-ribosyl)imidazole-4-carboxylate: step 1/2. This is Phosphoribosylaminoimidazole-succinocarboxamide synthase from Latilactobacillus sakei subsp. sakei (strain 23K) (Lactobacillus sakei subsp. sakei).